The following is a 420-amino-acid chain: Multifunctional CCA protein (420 aa).

Gly-8 and Arg-11 together coordinate ATP. Gly-8 and Arg-11 together coordinate CTP. Mg(2+) is bound by residues Asp-21 and Asp-23. ATP contacts are provided by Arg-91, Arg-137, and Arg-140. Arg-91, Arg-137, and Arg-140 together coordinate CTP. Residues 228-334 (TFVHTMLVLQ…LKLFNRLDVW (107 aa)) enclose the HD domain.

It belongs to the tRNA nucleotidyltransferase/poly(A) polymerase family. Bacterial CCA-adding enzyme type 1 subfamily. As to quaternary structure, monomer. Can also form homodimers and oligomers. Mg(2+) serves as cofactor. It depends on Ni(2+) as a cofactor.

It carries out the reaction a tRNA precursor + 2 CTP + ATP = a tRNA with a 3' CCA end + 3 diphosphate. The enzyme catalyses a tRNA with a 3' CCA end + 2 CTP + ATP = a tRNA with a 3' CCACCA end + 3 diphosphate. Catalyzes the addition and repair of the essential 3'-terminal CCA sequence in tRNAs without using a nucleic acid template. Adds these three nucleotides in the order of C, C, and A to the tRNA nucleotide-73, using CTP and ATP as substrates and producing inorganic pyrophosphate. tRNA 3'-terminal CCA addition is required both for tRNA processing and repair. Also involved in tRNA surveillance by mediating tandem CCA addition to generate a CCACCA at the 3' terminus of unstable tRNAs. While stable tRNAs receive only 3'-terminal CCA, unstable tRNAs are marked with CCACCA and rapidly degraded. The sequence is that of Multifunctional CCA protein from Pasteurella multocida (strain Pm70).